We begin with the raw amino-acid sequence, 256 residues long: 14-3-3-like protein GF14-C (256 aa).

The protein belongs to the 14-3-3 family. As to quaternary structure, may form a complex with the transcriptional activator VP1 and the bZIP transcription factor EMBP1. In terms of tissue distribution, expressed in seedlings, internodes and panicles.

Its subcellular location is the cytoplasm. The protein localises to the nucleus. Its function is as follows. Is associated with a DNA binding complex that binds to the G box, a well-characterized cis-acting DNA regulatory element found in plant genes. This is 14-3-3-like protein GF14-C (GF14C) from Oryza sativa subsp. japonica (Rice).